The primary structure comprises 102 residues: Large ribosomal subunit protein uL24 (102 aa).

Belongs to the universal ribosomal protein uL24 family. In terms of assembly, part of the 50S ribosomal subunit.

Functionally, one of two assembly initiator proteins, it binds directly to the 5'-end of the 23S rRNA, where it nucleates assembly of the 50S subunit. Its function is as follows. One of the proteins that surrounds the polypeptide exit tunnel on the outside of the subunit. The sequence is that of Large ribosomal subunit protein uL24 from Burkholderia mallei (strain NCTC 10229).